A 218-amino-acid polypeptide reads, in one-letter code: Adenylate kinase (218 aa).

12 to 17 (GAGKGT) is an ATP binding site. An NMP region spans residues 32–61 (STGDMLREARSSGTEMGKRVAEVMDRGELV). AMP is bound by residues Thr-33, Arg-38, 59-61 (ELV), 85-88 (GFPR), and Gln-92. The segment at 126–164 (GRFTCGNCGEVYHDVTKPTKEPGKCDVCGSTDLRRRADD) is LID. Arg-127 provides a ligand contact to ATP. Zn(2+) contacts are provided by Cys-130 and Cys-133. 136–137 (VY) is a binding site for ATP. Zn(2+)-binding residues include Cys-150 and Cys-153. AMP-binding residues include Arg-161 and Arg-172. Residue Ala-200 participates in ATP binding.

The protein belongs to the adenylate kinase family. Monomer.

The protein localises to the cytoplasm. The enzyme catalyses AMP + ATP = 2 ADP. It functions in the pathway purine metabolism; AMP biosynthesis via salvage pathway; AMP from ADP: step 1/1. In terms of biological role, catalyzes the reversible transfer of the terminal phosphate group between ATP and AMP. Plays an important role in cellular energy homeostasis and in adenine nucleotide metabolism. The sequence is that of Adenylate kinase from Paracoccus denitrificans (strain Pd 1222).